Consider the following 310-residue polypeptide: Aspartate carbamoyltransferase catalytic subunit 2 (310 aa).

R55 and T56 together coordinate carbamoyl phosphate. K85 is an L-aspartate binding site. The carbamoyl phosphate site is built by R106, H134, and Q137. The L-aspartate site is built by R167 and R228. Residues L266 and P267 each coordinate carbamoyl phosphate.

The protein belongs to the aspartate/ornithine carbamoyltransferase superfamily. ATCase family. In terms of assembly, heterododecamer (2C3:3R2) of six catalytic PyrB chains organized as two trimers (C3), and six regulatory PyrI chains organized as three dimers (R2).

It carries out the reaction carbamoyl phosphate + L-aspartate = N-carbamoyl-L-aspartate + phosphate + H(+). It functions in the pathway pyrimidine metabolism; UMP biosynthesis via de novo pathway; (S)-dihydroorotate from bicarbonate: step 2/3. Catalyzes the condensation of carbamoyl phosphate and aspartate to form carbamoyl aspartate and inorganic phosphate, the committed step in the de novo pyrimidine nucleotide biosynthesis pathway. This is Aspartate carbamoyltransferase catalytic subunit 2 from Shewanella halifaxensis (strain HAW-EB4).